We begin with the raw amino-acid sequence, 481 residues long: Multiple inositol polyphosphate phosphatase 1 (481 aa).

A signal peptide spans 1–30; that stretch reads MLRGARSHLPASVAPAAVLAAALLSSFARC. Residue His-89 is part of the active site. N-linked (GlcNAc...) asparagine glycans are attached at residues Asn-236 and Asn-475. Residues 478 to 481 carry the Prevents secretion from ER motif; it reads SDEL.

The protein belongs to the histidine acid phosphatase family. MINPP1 subfamily. Post-translationally, N-glycosylated. As to expression, widely expressed with highest levels in kidney, intestine, thymus and liver.

The protein localises to the endoplasmic reticulum lumen. Its subcellular location is the secreted. It is found in the cell membrane. The enzyme catalyses 1D-myo-inositol hexakisphosphate + H2O = 1D-myo-inositol 1,2,4,5,6-pentakisphosphate + phosphate. It catalyses the reaction 1D-myo-inositol 1,2,4,5,6-pentakisphosphate + H2O = 1D-myo-inositol 1,2,5,6-tetrakisphosphate + phosphate. It carries out the reaction 1D-myo-inositol 1,2,5,6-tetrakisphosphate + H2O = 1D-myo-inositol 1,2,6-trisphosphate + phosphate. The catalysed reaction is 1D-myo-inositol 1,2,6-trisphosphate + H2O = 1D-myo-inositol 1,2-bisphosphate + phosphate. The enzyme catalyses 1D-myo-inositol 1,2-bisphosphate + H2O = 1D-myo-inositol 2-phosphate + phosphate. It catalyses the reaction 1D-myo-inositol hexakisphosphate + H2O = 1D-myo-inositol 1,2,3,5,6-pentakisphosphate + phosphate. It carries out the reaction 1D-myo-inositol 1,2,3,5,6-pentakisphosphate + H2O = 1D-myo-inositol 1,2,3,6-tetrakisphosphate + phosphate. The catalysed reaction is 1D-myo-inositol 1,2,3,6-tetrakisphosphate + H2O = 1D-myo-inositol 1,2,3-trisphosphate + phosphate. The enzyme catalyses 1D-myo-inositol 1,2,3-trisphosphate + H2O = 1D-myo-inositol 2,3-bisphosphate + phosphate. It catalyses the reaction 1D-myo-inositol 2,3-bisphosphate + H2O = 1D-myo-inositol 2-phosphate + phosphate. It carries out the reaction 1D-myo-inositol 1,3,4,5,6-pentakisphosphate + H2O = 1D-myo-inositol 1,4,5,6-tetrakisphosphate + phosphate. The catalysed reaction is 1D-myo-inositol 1,4,5,6-tetrakisphosphate + H2O = 1D-myo-inositol 1,4,5-trisphosphate + phosphate. The enzyme catalyses (2R)-2,3-bisphosphoglycerate + H2O = (2R)-2-phosphoglycerate + phosphate. Functionally, multiple inositol polyphosphate phosphatase that hydrolyzes 1D-myo-inositol 1,3,4,5,6-pentakisphosphate (InsP5[2OH]) and 1D-myo-inositol hexakisphosphate (InsP6) to a range of less phosphorylated inositol phosphates. This regulates the availability of these various small molecule second messengers and metal chelators which control many aspects of cell physiology. Has a weak in vitro activity towards 1D-myo-inositol 1,4,5-trisphosphate which is unlikely to be physiologically relevant. By regulating intracellular inositol polyphosphates pools, which act as metal chelators, it may control the availability of intracellular calcium and iron, which are important for proper neuronal development and homeostasis. May have a dual substrate specificity, and function as a 2,3-bisphosphoglycerate 3-phosphatase hydrolyzing 2,3-bisphosphoglycerate to 2-phosphoglycerate. 2,3-bisphosphoglycerate (BPG) is formed as part of the Rapoport-Luebering glycolytic bypass and is a regulator of systemic oxygen homeostasis as the major allosteric effector of hemoglobin. The sequence is that of Multiple inositol polyphosphate phosphatase 1 from Mus musculus (Mouse).